A 305-amino-acid chain; its full sequence is Taste receptor type 2 member 13 (305 aa).

Over 1–7 the chain is Extracellular; that stretch reads MGSSLYD. The chain crosses the membrane as a helical span at residues 8 to 28; it reads ILTIVMIAEFIFGNVTNGFIV. The Cytoplasmic segment spans residues 29 to 42; the sequence is LTNCIAWLSKRTLS. A helical transmembrane segment spans residues 43 to 63; sequence FIGWIQLFLAISRVVLIWEML. Over 64–88 the chain is Extracellular; sequence LAWLKYMKYSFSYLAGTELRVMMLT. The chain crosses the membrane as a helical span at residues 89–109; it reads WVVSNHFSLWLATILSIFYLL. The Cytoplasmic segment spans residues 110–128; the sequence is KIASFSRPVFLYLKWRVKK. Residues 129-149 traverse the membrane as a helical segment; the sequence is VLLLILLGNLIFLMFNILQIN. At 150-182 the chain is on the extracellular side; sequence THIEDWMDQYKRNITWDSRVNEFVGFSNLVLLE. Asn162 carries N-linked (GlcNAc...) asparagine glycosylation. A helical transmembrane segment spans residues 183-203; it reads MIMFSVTPFTVALVSFILLIF. Over 204-232 the chain is Cytoplasmic; the sequence is SLWKHLQKMHLSSRGERDPSTKAHVNALR. A helical transmembrane segment spans residues 233–253; sequence IMVSFLLLYATYFISFFISLI. At 254–262 the chain is on the extracellular side; the sequence is PMAHKKGLD. The helical transmembrane segment at 263-283 threads the bilayer; it reads LMFSLTVGLFYPSSHSFILIL. Over 284–305 the chain is Cytoplasmic; the sequence is GHSNLRHSSCLVITYLRCKEKD.

This sequence belongs to the G-protein coupled receptor T2R family. As to expression, expressed in subsets of taste receptor cells of the tongue and palate epithelium and exclusively in gustducin-positive cells. Expressed in 15% taste bud cells in circumvallate and foliate papillae but only in 2% in fungiform papillae. Expressed in the duodenum, antrum and fundus (part of the stomach).

It localises to the membrane. Receptor that may play a role in the perception of bitterness and is gustducin-linked. May play a role in sensing the chemical composition of the gastrointestinal content. The activity of this receptor may stimulate alpha gustducin, mediate PLC-beta-2 activation and lead to the gating of TRPM5. The polypeptide is Taste receptor type 2 member 13 (Tas2r13) (Rattus norvegicus (Rat)).